Consider the following 259-residue polypeptide: Probable ABC transporter permease protein RP096 (259 aa).

Helical transmembrane passes span 13-35, 49-69, 148-168, 195-215, and 237-257; these read TIKF…SSII, LFIG…SGAV, VIAA…IGVM, PIDV…ISII, and AVVN…ELFF.

The protein belongs to the MlaE permease family.

The protein resides in the cell inner membrane. In terms of biological role, could be part of an ABC transporter complex. This Rickettsia prowazekii (strain Madrid E) protein is Probable ABC transporter permease protein RP096.